Reading from the N-terminus, the 241-residue chain is 2,3,4,5-tetrahydropyridine-2,6-dicarboxylate N-acetyltransferase (241 aa).

This sequence belongs to the transferase hexapeptide repeat family. DapH subfamily.

It catalyses the reaction (S)-2,3,4,5-tetrahydrodipicolinate + acetyl-CoA + H2O = L-2-acetamido-6-oxoheptanedioate + CoA. Its pathway is amino-acid biosynthesis; L-lysine biosynthesis via DAP pathway; LL-2,6-diaminopimelate from (S)-tetrahydrodipicolinate (acetylase route): step 1/3. In terms of biological role, catalyzes the transfer of an acetyl group from acetyl-CoA to tetrahydrodipicolinate. In Caldanaerobacter subterraneus subsp. tengcongensis (strain DSM 15242 / JCM 11007 / NBRC 100824 / MB4) (Thermoanaerobacter tengcongensis), this protein is 2,3,4,5-tetrahydropyridine-2,6-dicarboxylate N-acetyltransferase.